An 83-amino-acid chain; its full sequence is Mu-theraphotoxin-Hhn2g (83 aa).

Residues 1–21 form the signal peptide; that stretch reads MKASMYLALAGLVLLFVVGYA. Residues 22-48 constitute a propeptide that is removed on maturation; that stretch reads SESEEKEFPRELLSKIFAVDDFKGEER. 2 disulfide bridges follow: Cys50/Cys65 and Cys57/Cys70. Residue Leu81 is modified to Leucine amide.

Belongs to the neurotoxin 10 (Hwtx-1) family. 15 (Hntx-3) subfamily. Monomer. As to expression, expressed by the venom gland.

The protein localises to the secreted. Functionally, lethal neurotoxin. Selectively blocks tetrodotoxin-sensitive voltage-gated sodium channels (Nav). Does not affect tetrodotoxin-resistant voltage-gated sodium channels or calcium channels. This is Mu-theraphotoxin-Hhn2g from Cyriopagopus hainanus (Chinese bird spider).